Here is a 152-residue protein sequence, read N- to C-terminus: Pertussis toxin subunit 4 (152 aa).

Positions 1-42 (MLRRFPTRTTAPGQGGARRSRVRALAWLLASGAMTHLSPALA) are cleaved as a signal peptide. 2 disulfides stabilise this stretch: Cys73-Cys93 and Cys145-Cys151.

In terms of assembly, pertussis toxin contains five different chains, S1-S5. They are organized into 2 functional subunits: A, composed of S1 (which is toxic) and B, containing S2, S3, S5, and two copies of S4 (B binds to the membrane receptors). Dimers of S2-S4 and S3-S4 are held together by S5.

The protein resides in the secreted. It is found in the host cell membrane. Functionally, PTX oligomer B binds to receptors on the eukaryotic cell surface and facilitates the translocation of the toxic subunit across the cell membrane. In Bordetella parapertussis (strain 12822 / ATCC BAA-587 / NCTC 13253), this protein is Pertussis toxin subunit 4 (ptxD).